Here is a 147-residue protein sequence, read N- to C-terminus: SPI-1 type 3 secretion system pilotin (147 aa).

The N-terminal stretch at 1-15 is a signal peptide; it reads MKKFYSCLPVFLLIG. Residue C16 is the site of N-palmitoyl cysteine attachment. A lipid anchor (S-diacylglycerol cysteine) is attached at C16.

The protein belongs to the InvH family.

It is found in the cell outer membrane. Functionally, involved in the synthesis of the type III secretion system (T3SS), also called injectisome, which is used to inject bacterial effector proteins into eukaryotic host cells. Pilot protein that is required for the proper localization of the secretin InvG/SctC in the outer membrane. Necessary for efficient adherence and entry of these organisms into cultured epithelial cells. This is SPI-1 type 3 secretion system pilotin from Salmonella typhimurium (strain SL1344).